The sequence spans 258 residues: MQENLKNDKLKIGKYEFDSRFILGSGKYSLELIKSAIEEAKTQIITLALRRANTGEIANILDYIPKNITLLPNTSGARNADEALRIARLSRELGCGELIKIEVISDSRYLLPDNYETIKACELLAKEGFTPLPYMHADLYAARAMRDAGAAAIMPLAAPIGSNKGLCAKEFIQILLNEIDLPIIVDAGIGSPSQACEAMQMGVSAVMVNTAIAEAKDVALMAKAFSLAVNAGRAAFLAGLASVSKAKASSPLTGFLRD.

The active-site Schiff-base intermediate with DXP is the lysine 100. Residues glycine 161, 187-188, and 209-210 contribute to the 1-deoxy-D-xylulose 5-phosphate site; these read AG and NT.

This sequence belongs to the ThiG family. In terms of assembly, homotetramer. Forms heterodimers with either ThiH or ThiS.

The protein localises to the cytoplasm. The catalysed reaction is [ThiS sulfur-carrier protein]-C-terminal-Gly-aminoethanethioate + 2-iminoacetate + 1-deoxy-D-xylulose 5-phosphate = [ThiS sulfur-carrier protein]-C-terminal Gly-Gly + 2-[(2R,5Z)-2-carboxy-4-methylthiazol-5(2H)-ylidene]ethyl phosphate + 2 H2O + H(+). Its pathway is cofactor biosynthesis; thiamine diphosphate biosynthesis. In terms of biological role, catalyzes the rearrangement of 1-deoxy-D-xylulose 5-phosphate (DXP) to produce the thiazole phosphate moiety of thiamine. Sulfur is provided by the thiocarboxylate moiety of the carrier protein ThiS. In vitro, sulfur can be provided by H(2)S. This Campylobacter jejuni subsp. jejuni serotype O:6 (strain 81116 / NCTC 11828) protein is Thiazole synthase.